We begin with the raw amino-acid sequence, 1919 residues long: Disks large homolog 5 (1919 aa).

The interval 98 to 142 (AEGAGSTYSVLSTMPSDSESSSSLSSVGTTGKAPSPPPLLTDQQV) is disordered. Residues 109–123 (STMPSDSESSSSLSS) show a composition bias toward low complexity. S264 and S295 each carry phosphoserine. A coiled-coil region spans residues 383–599 (LNKATAQNKD…LEKEARFRQL (217 aa)). PDZ domains lie at 620–710 (VVEF…RRRK) and 705–796 (VVRR…LKVF). S900 carries the phosphoserine modification. 5 disordered regions span residues 927–1122 (GVGE…FRPK), 1150–1187 (QEWA…PSTT), 1201–1230 (SHRV…HQGR), 1245–1264 (EMRA…LGSS), and 1271–1306 (AERI…PQSP). At T984 the chain carries Phosphothreonine. S1000 is subject to Phosphoserine. A Phosphothreonine modification is found at T1011. The segment covering 1017 to 1030 (RRSDSIKFQHRLET) has biased composition (basic and acidic residues). Residue S1021 is modified to Phosphoserine. The span at 1045–1055 (TSPPSALPPDV) shows a compositional bias: pro residues. T1183 is subject to Phosphothreonine. Phosphoserine occurs at positions 1209 and 1263. Low complexity-rich tracts occupy residues 1252-1264 (SNSL…LGSS) and 1284-1298 (RSVV…SHSE). A Phosphoserine modification is found at S1334. Residues 1350 to 1429 (HVKVQKGSEP…TITILAQYNP (80 aa)) enclose the PDZ 3 domain. The segment at 1434–1493 (LSSHSRSSSHLDPAGTHSTLQGSGTTTPEHPSVIDPLMEQDEGPSTPPAKQSSSRIAGDA) is disordered. A compositionally biased stretch (polar residues) spans 1449–1462 (THSTLQGSGTTTPE). The 82-residue stretch at 1501 to 1582 (RVVFIKKSQL…GVRLKVQYRP (82 aa)) folds into the PDZ 4 domain. The 69-residue stretch at 1593–1661 (GDSFYIRALY…PSKYVMDQEF (69 aa)) folds into the SH3 domain. The residue at position 1666 (S1666) is a Phosphoserine. Positions 1722-1905 (DSVSLAYQRV…ICTQILAMVN (184 aa)) constitute a Guanylate kinase-like domain.

Belongs to the MAGUK family. Interacts with MPP1. Interacts with CTNNB1 and with the third SH3 domain of SORBS3 to form a ternary complex. Interacts (via coiled-coil domain) with MARK3. Interacts (via PDZ domain 3) with STK3/MST2 and STK4/MST1. Interacts with SCRIB. Interacts with CTNB1, SMO and (via PDZ4 or guanylate kinase-like domain) with KIF7. As to expression, highly expressed in normal breast tissues and low-grade breast cancer tissues (at protein level). Highly expressed in the placenta and prostate. Expressed at a lower level in the thyroid, spinal cord, trachea, adrenal gland, skeletal muscle, pancreas, heart, brain, liver and kidney. A short splice product shows more limited expression, being absent from at least the brain.

It localises to the cell junction. It is found in the cell membrane. The protein localises to the postsynaptic density. Its subcellular location is the cytoplasm. The protein resides in the cytoskeleton. It localises to the cilium basal body. Acts as a regulator of the Hippo signaling pathway. Negatively regulates the Hippo signaling pathway by mediating the interaction of MARK3 with STK3/4, bringing them together to promote MARK3-dependent hyperphosphorylation and inactivation of STK3 kinase activity toward LATS1. Positively regulates the Hippo signaling pathway by mediating the interaction of SCRIB with STK4/MST1 and LATS1 which is important for the activation of the Hippo signaling pathway. Involved in regulating cell proliferation, maintenance of epithelial polarity, epithelial-mesenchymal transition (EMT), cell migration and invasion. Plays an important role in dendritic spine formation and synaptogenesis in cortical neurons; regulates synaptogenesis by enhancing the cell surface localization of N-cadherin. Acts as a positive regulator of hedgehog (Hh) signaling pathway. Plays a critical role in the early point of the SMO activity cycle by interacting with SMO at the ciliary base to induce the accumulation of KIF7 and GLI2 at the ciliary tip for GLI2 activation. In Homo sapiens (Human), this protein is Disks large homolog 5 (DLG5).